The chain runs to 905 residues: MLSPFDWRRGISSSGTGGTMAAQPLSSTAATTAAATGATAATAATAATTSATLSTAAASTSTTAAPSAGATWINHHLAVEADSSQPANGSDAQAGVEGPTMPAGYLPLYEDVETAAEDAGYALIDDISEWLLGSVGSEAAVGGPENSTNLAVTGANGTLAWLEALNSTQPAQSNSSAEDGERGRYSLRSFVEQQLAGGGAAGAGDGGDAGIALIDSGEEAALDNVADAETDYGMLGGFGDAELLQRTATVARETLGNRTAPSTTSYDGGGSGDVGVAGGLAGTAGGGVGGAGGSGGSTFMLLLENFNDYFPNYNGSTVSGTSTIAPGVAITGSRGSGLLLEQNLTGLYLDGYRLNCTNETLNLTDSCGELRVVDHNYWALILILFPILTLFGNILVILSVCRERSLQTVTNYFIVSLAIADLLVAVVVMPFAVYFLVNGAWALPDVVCDFYIAMDVICSTSSIFNLVAISIDRYIAVTQPIKYAKHKNSRRVCLTILLVWAISAAIGSPIVLGLNNTPNREPDVCAFYNADFILYSSLSSFYIPCIIMVFLYWNIFKALRSRARKQRAARKPHLSELTGGSVIENIAQTRRLAETALDSSRHASRILPDEAATNTASGSNEEEDENAISPDIDDCHVIVNDKSTEFMLATVVEETGNSVVAQITTQPQLVVADPNGNHDSGYAASNVDDVLAGVAPASASAATSAAPRSSGSPPDSPLPSGATLQRSSVSSQRRPTGDDSPKRGEPALRSVGVDNSSVAMKPLSFVRYGVQEAMTLARNDSTLSTTSKTSSRKDKKNSQASRFTIYKVHKASKKKREKSSAKKERKATKTLAIVLGVFLFCWLPFFSCNIMDAMCAKFKKDCRPGLTAYMMTTWLGYINSFVNPVIYTIFNPEFRKAFKKIMHMG.

Residues 1-23 are disordered; that stretch reads MLSPFDWRRGISSSGTGGTMAAQ. Over 1-377 the chain is Extracellular; the sequence is MLSPFDWRRG…GELRVVDHNY (377 aa). Residues asparagine 88, asparagine 146, asparagine 156, asparagine 166, asparagine 174, asparagine 257, asparagine 314, and asparagine 343 are each glycosylated (N-linked (GlcNAc...) asparagine). Residues 378-398 form a helical membrane-spanning segment; sequence WALILILFPILTLFGNILVIL. The Cytoplasmic segment spans residues 399 to 416; the sequence is SVCRERSLQTVTNYFIVS. Residues 417-437 traverse the membrane as a helical segment; the sequence is LAIADLLVAVVVMPFAVYFLV. Topologically, residues 438–450 are extracellular; it reads NGAWALPDVVCDF. Residues cysteine 448 and cysteine 525 are joined by a disulfide bond. The helical transmembrane segment at 451–471 threads the bilayer; sequence YIAMDVICSTSSIFNLVAISI. The Cytoplasmic segment spans residues 472 to 493; the sequence is DRYIAVTQPIKYAKHKNSRRVC. Residues 494–514 traverse the membrane as a helical segment; it reads LTILLVWAISAAIGSPIVLGL. At 515-531 the chain is on the extracellular side; sequence NNTPNREPDVCAFYNAD. A helical membrane pass occupies residues 532–552; sequence FILYSSLSSFYIPCIIMVFLY. Residues 553–830 are Cytoplasmic-facing; that stretch reads WNIFKALRSR…AKKERKATKT (278 aa). Disordered stretches follow at residues 600–631, 702–753, and 780–799; these read SRHA…ISPD, ATSA…SVGV, and DSTL…KNSQ. Over residues 702–722 the composition is skewed to low complexity; the sequence is ATSAAPRSSGSPPDSPLPSGA. Residues 723 to 734 are compositionally biased toward polar residues; sequence TLQRSSVSSQRR. Residues 735-746 show a composition bias toward basic and acidic residues; that stretch reads PTGDDSPKRGEP. The chain crosses the membrane as a helical span at residues 831 to 851; that stretch reads LAIVLGVFLFCWLPFFSCNIM. Topologically, residues 852–869 are extracellular; sequence DAMCAKFKKDCRPGLTAY. Residues 870–890 form a helical membrane-spanning segment; the sequence is MMTTWLGYINSFVNPVIYTIF. Residues 891–905 are Cytoplasmic-facing; it reads NPEFRKAFKKIMHMG.

This sequence belongs to the G-protein coupled receptor 1 family. In terms of tissue distribution, highest expression is in adult heads.

Its subcellular location is the cell membrane. Receptor for dopamine. The activity of this receptor is mediated by G proteins which inhibit adenylyl cyclase. This is Dopamine D2-like receptor from Drosophila melanogaster (Fruit fly).